The following is a 21-amino-acid chain: Phenol-soluble modulin alpha 1 peptide (21 aa).

This sequence belongs to the phenol-soluble modulin alpha peptides family.

Functionally, peptide which can recruit, activate and subsequently lyse human neutrophils, thus eliminating the main cellular defense against infection. This chain is Phenol-soluble modulin alpha 1 peptide (psmA1), found in Staphylococcus aureus (strain Mu3 / ATCC 700698).